Consider the following 90-residue polypeptide: Co-chaperonin GroES (90 aa).

It belongs to the GroES chaperonin family. In terms of assembly, heptamer of 7 subunits arranged in a ring. Interacts with the chaperonin GroEL.

The protein resides in the cytoplasm. Functionally, together with the chaperonin GroEL, plays an essential role in assisting protein folding. The GroEL-GroES system forms a nano-cage that allows encapsulation of the non-native substrate proteins and provides a physical environment optimized to promote and accelerate protein folding. GroES binds to the apical surface of the GroEL ring, thereby capping the opening of the GroEL channel. This is Co-chaperonin GroES from Bacteroides thetaiotaomicron (strain ATCC 29148 / DSM 2079 / JCM 5827 / CCUG 10774 / NCTC 10582 / VPI-5482 / E50).